The following is a 161-amino-acid chain: Cyclic pyranopterin monophosphate synthase (161 aa).

Substrate-binding positions include 75–77 (LCH) and 113–114 (ME). Aspartate 128 is a catalytic residue.

The protein belongs to the MoaC family. As to quaternary structure, homohexamer; trimer of dimers.

It catalyses the reaction (8S)-3',8-cyclo-7,8-dihydroguanosine 5'-triphosphate = cyclic pyranopterin phosphate + diphosphate. Its pathway is cofactor biosynthesis; molybdopterin biosynthesis. In terms of biological role, catalyzes the conversion of (8S)-3',8-cyclo-7,8-dihydroguanosine 5'-triphosphate to cyclic pyranopterin monophosphate (cPMP). This chain is Cyclic pyranopterin monophosphate synthase, found in Thioalkalivibrio sulfidiphilus (strain HL-EbGR7).